Consider the following 767-residue polypeptide: 5-methyltetrahydropteroyltriglutamate--homocysteine methyltransferase (767 aa).

5-methyltetrahydropteroyltri-L-glutamate contacts are provided by residues 17 to 20 (RELK) and Lys-117. L-homocysteine contacts are provided by residues 441–443 (IGS) and Glu-494. L-methionine contacts are provided by residues 441–443 (IGS) and Glu-494. 5-methyltetrahydropteroyltri-L-glutamate-binding positions include 525–526 (RC) and Trp-571. Asp-609 serves as a coordination point for L-homocysteine. Residue Asp-609 participates in L-methionine binding. Residue Glu-615 participates in 5-methyltetrahydropteroyltri-L-glutamate binding. Residues His-652, Cys-654, and Glu-676 each coordinate Zn(2+). His-705 acts as the Proton donor in catalysis. A Zn(2+)-binding site is contributed by Cys-737.

It belongs to the vitamin-B12 independent methionine synthase family. It depends on Zn(2+) as a cofactor.

It catalyses the reaction 5-methyltetrahydropteroyltri-L-glutamate + L-homocysteine = tetrahydropteroyltri-L-glutamate + L-methionine. It functions in the pathway amino-acid biosynthesis; L-methionine biosynthesis via de novo pathway; L-methionine from L-homocysteine (MetE route): step 1/1. Functionally, catalyzes the transfer of a methyl group from 5-methyltetrahydrofolate to homocysteine resulting in methionine formation. In Bifidobacterium longum (strain NCC 2705), this protein is 5-methyltetrahydropteroyltriglutamate--homocysteine methyltransferase.